Reading from the N-terminus, the 265-residue chain is 3-methyl-2-oxobutanoate hydroxymethyltransferase (265 aa).

Mg(2+)-binding residues include aspartate 45 and aspartate 84. 3-methyl-2-oxobutanoate-binding positions include 45-46 (DS), aspartate 84, and lysine 112. A Mg(2+)-binding site is contributed by glutamate 114. Residue glutamate 181 is the Proton acceptor of the active site.

Belongs to the PanB family. Homodecamer; pentamer of dimers. Requires Mg(2+) as cofactor.

The protein resides in the cytoplasm. The catalysed reaction is 3-methyl-2-oxobutanoate + (6R)-5,10-methylene-5,6,7,8-tetrahydrofolate + H2O = 2-dehydropantoate + (6S)-5,6,7,8-tetrahydrofolate. It participates in cofactor biosynthesis; (R)-pantothenate biosynthesis; (R)-pantoate from 3-methyl-2-oxobutanoate: step 1/2. In terms of biological role, catalyzes the reversible reaction in which hydroxymethyl group from 5,10-methylenetetrahydrofolate is transferred onto alpha-ketoisovalerate to form ketopantoate. In Wigglesworthia glossinidia brevipalpis, this protein is 3-methyl-2-oxobutanoate hydroxymethyltransferase.